The following is a 123-amino-acid chain: Small ribosomal subunit protein uS12c (123 aa).

The tract at residues 103-123 (AAGVKNRKQSRSKYGAKKPKE) is disordered. Residues 107 to 123 (KNRKQSRSKYGAKKPKE) are compositionally biased toward basic residues.

Belongs to the universal ribosomal protein uS12 family. In terms of assembly, part of the 30S ribosomal subunit.

It is found in the plastid. Its subcellular location is the chloroplast. Functionally, with S4 and S5 plays an important role in translational accuracy. Located at the interface of the 30S and 50S subunits. This Guillardia theta (Cryptophyte) protein is Small ribosomal subunit protein uS12c (rps12).